Consider the following 266-residue polypeptide: MLTFIGLGLFDEYDISLKGLEAIREADMVYAEFYTSCLMGTNLEKMEKLYGKKVFLLSREDVEQHPDWLSKAKNRNLCFLTGGDTMVSTTHVDLRLRAEKLGIDTRLIHGASIASAVSGLTGLQNYRFGKSASIPHPYESRRGTRIISETPYDTIKQNLELGLHTLVFLDIDKEKGYMTVNTALELLLEVEEKRGEGIMRGAAAVGIARAGSEKPVIRADYAENLKDFNFGKPLHILVIPGKLHFLEAEALVKLAGGPVGFMKEVE.

S-adenosyl-L-methionine contacts are provided by residues Leu-9, Asp-84, Val-87, 112-113, Leu-169, Ala-210, and His-235; that span reads SI.

It belongs to the diphthine synthase family. In terms of assembly, homodimer.

The enzyme catalyses 2-[(3S)-amino-3-carboxypropyl]-L-histidyl-[translation elongation factor 2] + 3 S-adenosyl-L-methionine = diphthine-[translation elongation factor 2] + 3 S-adenosyl-L-homocysteine + 3 H(+). It functions in the pathway protein modification; peptidyl-diphthamide biosynthesis. In terms of biological role, S-adenosyl-L-methionine-dependent methyltransferase that catalyzes the trimethylation of the amino group of the modified target histidine residue in translation elongation factor 2 (EF-2), to form an intermediate called diphthine. The three successive methylation reactions represent the second step of diphthamide biosynthesis. The sequence is that of Diphthine synthase from Methanosarcina barkeri (strain Fusaro / DSM 804).